The following is a 197-amino-acid chain: Protein SPMIP2 (197 aa).

The disordered stretch occupies residues 161–197 (SKAALPIGSRPPKLPKLPKKEEKSKFRPLHQHDARCY). A compositionally biased stretch (basic and acidic residues) spans 178 to 197 (PKKEEKSKFRPLHQHDARCY).

The protein is Protein SPMIP2 (SPMIP2) of Bos taurus (Bovine).